Here is a 956-residue protein sequence, read N- to C-terminus: MAM domain-containing glycosylphosphatidylinositol anchor protein 1 (956 aa).

The first 18 residues, 1-18, serve as a signal peptide directing secretion; the sequence is MEVTCLLLLALIPFHCRG. Ig-like domains follow at residues 24-123 and 132-230; these read PAQA…KSIR and PVLT…KSIT. A glycan (N-linked (GlcNAc...) asparagine) is linked at Asn42. Cystine bridges form between Cys60-Cys108 and Cys157-Cys214. N-linked (GlcNAc...) asparagine glycans are attached at residues Asn235, Asn257, and Asn307. Ig-like domains are found at residues 240–323, 338–432, 440–534, and 539–632; these read PTLK…KTVN, PDMI…VEVN, PTIS…VQLT, and PEVE…FQVS. Disulfide bonds link Cys262–Cys308, Cys357–Cys415, Cys463–Cys514, and Cys560–Cys616. Positions 644-744 constitute a Fibronectin type-III domain; the sequence is TPNPTRSHKL…SRVIHYTEPI (101 aa). An MAM domain is found at 752–919; that stretch reads NTCHFEDEKI…VTLKKGECPR (168 aa). The segment covering 780 to 789 has biased composition (polar residues); sequence LTQNPKRSPN. A disordered region spans residues 780-799; that stretch reads LTQNPKRSPNTGPPTDISGT. Ser933 carries GPI-anchor amidated serine lipidation. The propeptide at 934-956 is removed in mature form; that stretch reads GAPRLSSLQLWGSMTIFLLALQR.

Interacts heterophilically through its MAM domain with proteins in axon-rich regions and through its Ig-like domains with proteins in differentiating muscle. Interacts (through the Ig-like domains) with NLGN2. High levels detected in developing central and peripheral nervous systems with little expression elsewhere. In brain, highest levels in cerebral cortex and hindbrain at E15. At postnatal day 1, highest levels in basilar pons and superficial layers of the neocortex. In the developing spinal cord, restricted to a subpopulation of neurons in the dorsal and spinal ventral cord, probably D1 interneurons. Expressed in brain.

It localises to the cell membrane. Required for radial migration of cortical neurons in the superficial layer of the neocortex. Plays a role in the formation or maintenance of inhibitory synapses. May function by inhibiting the activity of NLGN2. The sequence is that of MAM domain-containing glycosylphosphatidylinositol anchor protein 1 (Mdga1) from Rattus norvegicus (Rat).